Consider the following 261-residue polypeptide: ATP synthase subunit a (261 aa).

8 consecutive transmembrane segments (helical) span residues 30–50 (VLFT…GLFM), 63–83 (WQVA…ANIG), 96–116 (LFMF…VLGL), 125–145 (IAIT…VGFW), 151–171 (FFSL…IAPI), 187–207 (LFVA…FVIN), 214–234 (LWLG…ISAL), and 235–255 (ELLV…LYIN).

This sequence belongs to the ATPase A chain family. In terms of assembly, F-type ATPases have 2 components, CF(1) - the catalytic core - and CF(0) - the membrane proton channel. CF(1) has five subunits: alpha(3), beta(3), gamma(1), delta(1), epsilon(1). CF(0) has three main subunits: a(1), b(2) and c(9-12). The alpha and beta chains form an alternating ring which encloses part of the gamma chain. CF(1) is attached to CF(0) by a central stalk formed by the gamma and epsilon chains, while a peripheral stalk is formed by the delta and b chains.

It is found in the cell inner membrane. Functionally, key component of the proton channel; it plays a direct role in the translocation of protons across the membrane. This chain is ATP synthase subunit a, found in Sphingopyxis alaskensis (strain DSM 13593 / LMG 18877 / RB2256) (Sphingomonas alaskensis).